The chain runs to 424 residues: Histidine--tRNA ligase (424 aa).

It belongs to the class-II aminoacyl-tRNA synthetase family. Homodimer.

The protein localises to the cytoplasm. It catalyses the reaction tRNA(His) + L-histidine + ATP = L-histidyl-tRNA(His) + AMP + diphosphate + H(+). In Salmonella agona (strain SL483), this protein is Histidine--tRNA ligase.